We begin with the raw amino-acid sequence, 264 residues long: MTDLTTIFKNHKAFIAFVVAGDPNFEATVDQVVALAEAGCDLVEIGIPFSDPVADGPEIQAADLRAFDQHITPQRVFELVVAIREKTTIPLVFLTYANIVYQFGYAAFAQQCQSLNVAGLIIPDMPLEASGELRPTLDHYGIALIPLIAPTSDDARIAAIAQQARGFIYVVSSLGVTGTRRHITTDLATLVAKIRHATTLPVAIGFGIHEPAQAQAMAQIADGVIVGSAVVHLIATHQPATAVLRDYTRRMRRALDGRTADTVD.

Residues glutamate 44 and aspartate 55 each act as proton acceptor in the active site.

It belongs to the TrpA family. Tetramer of two alpha and two beta chains.

The enzyme catalyses (1S,2R)-1-C-(indol-3-yl)glycerol 3-phosphate + L-serine = D-glyceraldehyde 3-phosphate + L-tryptophan + H2O. The protein operates within amino-acid biosynthesis; L-tryptophan biosynthesis; L-tryptophan from chorismate: step 5/5. Functionally, the alpha subunit is responsible for the aldol cleavage of indoleglycerol phosphate to indole and glyceraldehyde 3-phosphate. The polypeptide is Tryptophan synthase alpha chain (Lactiplantibacillus plantarum (strain ATCC BAA-793 / NCIMB 8826 / WCFS1) (Lactobacillus plantarum)).